The sequence spans 250 residues: AA9 family lytic polysaccharide monooxygenase E (250 aa).

Residues 1 to 21 form the signal peptide; it reads MAMSKIMSLTGLLASASLVAG. Positions 22 and 107 each coordinate Cu(2+). 2 cysteine pairs are disulfide-bonded: Cys-77/Cys-199 and Cys-118/Cys-122. N-linked (GlcNAc...) asparagine glycosylation occurs at Asn-159. Positions 185 and 194 each coordinate O2. Tyr-196 lines the Cu(2+) pocket.

The protein belongs to the polysaccharide monooxygenase AA9 family. Cu(2+) is required as a cofactor.

It localises to the secreted. The enzyme catalyses [(1-&gt;4)-beta-D-glucosyl]n+m + reduced acceptor + O2 = 4-dehydro-beta-D-glucosyl-[(1-&gt;4)-beta-D-glucosyl]n-1 + [(1-&gt;4)-beta-D-glucosyl]m + acceptor + H2O.. Functionally, lytic polysaccharide monooxygenase (LPMO) that depolymerizes crystalline and amorphous polysaccharides via the oxidation of scissile alpha- or beta-(1-4)-glycosidic bonds, yielding C1 or C4 oxidation products. Catalysis by LPMOs requires the reduction of the active-site copper from Cu(II) to Cu(I) by a reducing agent and H(2)O(2) or O(2) as a cosubstrate. This is AA9 family lytic polysaccharide monooxygenase E from Aspergillus tamarii.